The sequence spans 338 residues: Glycerol-3-phosphate dehydrogenase [NAD(P)+] (338 aa).

NADPH is bound by residues serine 14, tyrosine 15, histidine 35, and lysine 109. Sn-glycerol 3-phosphate-binding residues include lysine 109, glycine 138, and threonine 140. Alanine 142 serves as a coordination point for NADPH. Sn-glycerol 3-phosphate contacts are provided by lysine 194, aspartate 247, serine 257, arginine 258, and asparagine 259. Lysine 194 functions as the Proton acceptor in the catalytic mechanism. Arginine 258 lines the NADPH pocket. Valine 282 and glutamate 284 together coordinate NADPH.

The protein belongs to the NAD-dependent glycerol-3-phosphate dehydrogenase family.

It is found in the cytoplasm. It carries out the reaction sn-glycerol 3-phosphate + NAD(+) = dihydroxyacetone phosphate + NADH + H(+). It catalyses the reaction sn-glycerol 3-phosphate + NADP(+) = dihydroxyacetone phosphate + NADPH + H(+). It functions in the pathway membrane lipid metabolism; glycerophospholipid metabolism. Catalyzes the reduction of the glycolytic intermediate dihydroxyacetone phosphate (DHAP) to sn-glycerol 3-phosphate (G3P), the key precursor for phospholipid synthesis. The polypeptide is Glycerol-3-phosphate dehydrogenase [NAD(P)+] (Shewanella baltica (strain OS185)).